Here is a 251-residue protein sequence, read N- to C-terminus: Imidazole glycerol phosphate synthase subunit HisF (251 aa).

Catalysis depends on residues aspartate 11 and aspartate 130.

Belongs to the HisA/HisF family. As to quaternary structure, heterodimer of HisH and HisF.

The protein localises to the cytoplasm. It carries out the reaction 5-[(5-phospho-1-deoxy-D-ribulos-1-ylimino)methylamino]-1-(5-phospho-beta-D-ribosyl)imidazole-4-carboxamide + L-glutamine = D-erythro-1-(imidazol-4-yl)glycerol 3-phosphate + 5-amino-1-(5-phospho-beta-D-ribosyl)imidazole-4-carboxamide + L-glutamate + H(+). The protein operates within amino-acid biosynthesis; L-histidine biosynthesis; L-histidine from 5-phospho-alpha-D-ribose 1-diphosphate: step 5/9. Its function is as follows. IGPS catalyzes the conversion of PRFAR and glutamine to IGP, AICAR and glutamate. The HisF subunit catalyzes the cyclization activity that produces IGP and AICAR from PRFAR using the ammonia provided by the HisH subunit. This Listeria welshimeri serovar 6b (strain ATCC 35897 / DSM 20650 / CCUG 15529 / CIP 8149 / NCTC 11857 / SLCC 5334 / V8) protein is Imidazole glycerol phosphate synthase subunit HisF.